The sequence spans 103 residues: Large ribosomal subunit protein bL21 (103 aa).

It belongs to the bacterial ribosomal protein bL21 family. Part of the 50S ribosomal subunit. Contacts protein L20.

Functionally, this protein binds to 23S rRNA in the presence of protein L20. The protein is Large ribosomal subunit protein bL21 of Pasteurella multocida (strain Pm70).